Reading from the N-terminus, the 577-residue chain is Arginine--tRNA ligase (577 aa).

Positions 122–132 (PNVAKEMHVGH) match the 'HIGH' region motif.

It belongs to the class-I aminoacyl-tRNA synthetase family. Monomer.

The protein localises to the cytoplasm. It catalyses the reaction tRNA(Arg) + L-arginine + ATP = L-arginyl-tRNA(Arg) + AMP + diphosphate. The protein is Arginine--tRNA ligase of Shigella dysenteriae serotype 1 (strain Sd197).